Reading from the N-terminus, the 78-residue chain is Large ribosomal subunit protein bL28 (78 aa).

Residues Met-1–His-20 form a disordered region.

The protein belongs to the bacterial ribosomal protein bL28 family.

This is Large ribosomal subunit protein bL28 from Idiomarina loihiensis (strain ATCC BAA-735 / DSM 15497 / L2-TR).